Here is a 156-residue protein sequence, read N- to C-terminus: Cyclic pyranopterin monophosphate synthase (156 aa).

Residues 75-77 (LCH) and 111-112 (ME) each bind substrate. The active site involves Asp-126.

This sequence belongs to the MoaC family. As to quaternary structure, homohexamer; trimer of dimers.

It carries out the reaction (8S)-3',8-cyclo-7,8-dihydroguanosine 5'-triphosphate = cyclic pyranopterin phosphate + diphosphate. The protein operates within cofactor biosynthesis; molybdopterin biosynthesis. Catalyzes the conversion of (8S)-3',8-cyclo-7,8-dihydroguanosine 5'-triphosphate to cyclic pyranopterin monophosphate (cPMP). In Corynebacterium glutamicum (strain R), this protein is Cyclic pyranopterin monophosphate synthase.